The sequence spans 490 residues: Probable malate:quinone oxidoreductase (490 aa).

Belongs to the MQO family. FAD serves as cofactor.

It catalyses the reaction (S)-malate + a quinone = a quinol + oxaloacetate. It participates in carbohydrate metabolism; tricarboxylic acid cycle; oxaloacetate from (S)-malate (quinone route): step 1/1. The chain is Probable malate:quinone oxidoreductase from Corynebacterium jeikeium (strain K411).